Here is a 98-residue protein sequence, read N- to C-terminus: NADH-ubiquinone oxidoreductase chain 4L (98 aa).

The next 3 helical transmembrane spans lie at 1–21, 27–47, and 61–81; these read MIPT…GMLT, VASL…TALI, and IILL…LISI.

This sequence belongs to the complex I subunit 4L family. As to quaternary structure, core subunit of respiratory chain NADH dehydrogenase (Complex I) which is composed of 45 different subunits.

It localises to the mitochondrion inner membrane. It catalyses the reaction a ubiquinone + NADH + 5 H(+)(in) = a ubiquinol + NAD(+) + 4 H(+)(out). Its function is as follows. Core subunit of the mitochondrial membrane respiratory chain NADH dehydrogenase (Complex I) which catalyzes electron transfer from NADH through the respiratory chain, using ubiquinone as an electron acceptor. Part of the enzyme membrane arm which is embedded in the lipid bilayer and involved in proton translocation. The protein is NADH-ubiquinone oxidoreductase chain 4L (MT-ND4L) of Macaca sylvanus (Barbary macaque).